We begin with the raw amino-acid sequence, 327 residues long: Lipoyl synthase (327 aa).

7 residues coordinate [4Fe-4S] cluster: Cys-74, Cys-79, Cys-85, Cys-100, Cys-104, Cys-107, and Ser-314. The region spanning 86-303 (FSGGTATFMI…AEEGEKMGFK (218 aa)) is the Radical SAM core domain.

It belongs to the radical SAM superfamily. Lipoyl synthase family. [4Fe-4S] cluster serves as cofactor.

Its subcellular location is the cytoplasm. The catalysed reaction is [[Fe-S] cluster scaffold protein carrying a second [4Fe-4S](2+) cluster] + N(6)-octanoyl-L-lysyl-[protein] + 2 oxidized [2Fe-2S]-[ferredoxin] + 2 S-adenosyl-L-methionine + 4 H(+) = [[Fe-S] cluster scaffold protein] + N(6)-[(R)-dihydrolipoyl]-L-lysyl-[protein] + 4 Fe(3+) + 2 hydrogen sulfide + 2 5'-deoxyadenosine + 2 L-methionine + 2 reduced [2Fe-2S]-[ferredoxin]. Its pathway is protein modification; protein lipoylation via endogenous pathway; protein N(6)-(lipoyl)lysine from octanoyl-[acyl-carrier-protein]: step 2/2. Its function is as follows. Catalyzes the radical-mediated insertion of two sulfur atoms into the C-6 and C-8 positions of the octanoyl moiety bound to the lipoyl domains of lipoate-dependent enzymes, thereby converting the octanoylated domains into lipoylated derivatives. This Pseudomonas aeruginosa (strain LESB58) protein is Lipoyl synthase.